Reading from the N-terminus, the 148-residue chain is Large-conductance mechanosensitive channel (148 aa).

2 helical membrane-spanning segments follow: residues 12–32 and 85–105; these read AFAMKGNVIDMAVGVVIGGAF and GQFLQATFDFLIIAFAIFLFI.

The protein belongs to the MscL family. In terms of assembly, homopentamer.

It localises to the cell inner membrane. Channel that opens in response to stretch forces in the membrane lipid bilayer. May participate in the regulation of osmotic pressure changes within the cell. The chain is Large-conductance mechanosensitive channel from Bacteroides thetaiotaomicron (strain ATCC 29148 / DSM 2079 / JCM 5827 / CCUG 10774 / NCTC 10582 / VPI-5482 / E50).